We begin with the raw amino-acid sequence, 123 residues long: uncharacterized protein (123 aa).

Residues 35–100 (SQDHGDDPAE…SSGAPASQHC (66 aa)) form a disordered region. Residues 37–48 (DHGDDPAERGRT) show a composition bias toward basic and acidic residues. The segment covering 85–97 (ALPASPSSGAPAS) has biased composition (low complexity).

This is an uncharacterized protein from Homo sapiens (Human).